Here is a 329-residue protein sequence, read N- to C-terminus: MSVSGYPRHRPRRLRSTPAMRRLVAQTSLEPRNLVLPMFVADGIDELRPIASMPGVVQHTRDSLRRAAVAAVDAGVGGLNLFGVPRDQDKDATGSAGVDPDGILNVALRDLAEDLGDATVLMADTCLDEFTDHGHCGVLDGQGRVDNDATVARYVELAVAQAESGANVVGPSGMMDGQIGALRDGLDSAGYADVAILAYAAKFSSAFYGPFREAVSCSLSGDRRTYQQEPGNAREALREIKLDLDEGADIIMIKPASGYLDVVATAAGVSPVPVAAYQVSGEYAMICAAAANNWIDERAAVLESLTSIRRAGADIVFTYWAADVACWLS.

Lys202 acts as the Schiff-base intermediate with substrate in catalysis. The 5-aminolevulinate site is built by Arg212 and Arg223. Residue Glu239 coordinates Mg(2+). Lys254 acts as the Schiff-base intermediate with substrate in catalysis. Residues Ser280 and Tyr319 each contribute to the 5-aminolevulinate site.

Belongs to the ALAD family. Homooctamer.

The enzyme catalyses 2 5-aminolevulinate = porphobilinogen + 2 H2O + H(+). Its pathway is porphyrin-containing compound metabolism; protoporphyrin-IX biosynthesis; coproporphyrinogen-III from 5-aminolevulinate: step 1/4. In terms of biological role, catalyzes an early step in the biosynthesis of tetrapyrroles. Binds two molecules of 5-aminolevulinate per subunit, each at a distinct site, and catalyzes their condensation to form porphobilinogen. This is Delta-aminolevulinic acid dehydratase (hemB) from Mycobacterium leprae (strain TN).